Reading from the N-terminus, the 765-residue chain is Myotubularin-related protein 10-A (765 aa).

The Myotubularin phosphatase domain maps to Phe-209–Tyr-650.

This sequence belongs to the protein-tyrosine phosphatase family. Non-receptor class myotubularin subfamily.

In Xenopus laevis (African clawed frog), this protein is Myotubularin-related protein 10-A (mtmr10-a).